The sequence spans 95 residues: Aspartyl/glutamyl-tRNA(Asn/Gln) amidotransferase subunit C (95 aa).

Residues proline 51–glutamate 95 form a disordered region.

It belongs to the GatC family. In terms of assembly, heterotrimer of A, B and C subunits.

It catalyses the reaction L-glutamyl-tRNA(Gln) + L-glutamine + ATP + H2O = L-glutaminyl-tRNA(Gln) + L-glutamate + ADP + phosphate + H(+). It carries out the reaction L-aspartyl-tRNA(Asn) + L-glutamine + ATP + H2O = L-asparaginyl-tRNA(Asn) + L-glutamate + ADP + phosphate + 2 H(+). In terms of biological role, allows the formation of correctly charged Asn-tRNA(Asn) or Gln-tRNA(Gln) through the transamidation of misacylated Asp-tRNA(Asn) or Glu-tRNA(Gln) in organisms which lack either or both of asparaginyl-tRNA or glutaminyl-tRNA synthetases. The reaction takes place in the presence of glutamine and ATP through an activated phospho-Asp-tRNA(Asn) or phospho-Glu-tRNA(Gln). The sequence is that of Aspartyl/glutamyl-tRNA(Asn/Gln) amidotransferase subunit C from Myxococcus xanthus (strain DK1622).